The sequence spans 40 residues: Protamine-1 (40 aa).

The interval 1–40 (MPPRRKRVSSAPRRRRRTYRRTTAHKHQDRPVHRRRRRRH) is disordered.

In terms of tissue distribution, testis.

Its subcellular location is the nucleus. The protein resides in the chromosome. Its function is as follows. Protamines substitute for histones in the chromatin of sperm during the haploid phase of spermatogenesis. They compact sperm DNA into a highly condensed, stable and inactive complex. The sequence is that of Protamine-1 (PBP1) from Bufo japonicus (Japanese common toad).